A 1034-amino-acid chain; its full sequence is FERM domain-containing protein 4B (1034 aa).

Residues 59 to 361 (RHCQVHLLDD…SQHQFYLDRK (303 aa)) form the FERM domain. A Phosphoserine modification is found at Ser372. Coiled-coil stretches lie at residues 417 to 450 (EVSE…ELKK) and 531 to 561 (KKKR…RCGK). Positions 542-971 (MKKLQEIENA…TQLTIGLSDY (430 aa)) are necessary for adherens junction and tight junction localization. Residues 576–589 (PSESSSLSDTTTYD) show a composition bias toward low complexity. Disordered stretches follow at residues 576–614 (PSES…ILPP), 635–698 (DTRQ…LESQ), 712–735 (FSLS…YTSQ), and 752–786 (TTQT…AQKD). Ser608 bears the Phosphoserine mark. Composition is skewed to polar residues over residues 635 to 650 (DTRQ…SSPY) and 663 to 674 (MPTTPVLTRNAY). Residues 675 to 685 (SSSHLEPESSS) show a composition bias toward low complexity. A Phosphoserine modification is found at Ser697. A compositionally biased stretch (low complexity) spans 713–722 (SLSKSQRSSS). Polar residues predominate over residues 769 to 781 (QNVSTSNSGSMPN). Lys882 participates in a covalent cross-link: Glycyl lysine isopeptide (Lys-Gly) (interchain with G-Cter in SUMO2). 2 disordered regions span residues 905–925 (RASG…SDRG) and 1004–1034 (DGTD…GTLV). Residues 906-920 (ASGQKDQGHSPQTSF) show a composition bias toward polar residues. Position 915 is a phosphoserine (Ser915). Over residues 1018 to 1034 (SEQRLFWHEDSKPGTLV) the composition is skewed to basic and acidic residues. Lys1029 is covalently cross-linked (Glycyl lysine isopeptide (Lys-Gly) (interchain with G-Cter in SUMO2)).

As to quaternary structure, interacts with CYTH3. Interacts with PARD3. Interacts with CYTH1.

It is found in the cytoplasm. Its subcellular location is the cytoskeleton. It localises to the cell junction. The protein resides in the tight junction. The protein localises to the adherens junction. In terms of biological role, member of GRP1 signaling complexes that are acutely recruited to plasma membrane ruffles in response to insulin receptor signaling. May function as a scaffolding protein that regulates epithelial cell polarity by connecting ARF6 activation with the PAR3 complex. Plays a redundant role with FRMD4A in epithelial polarization. In Homo sapiens (Human), this protein is FERM domain-containing protein 4B.